The sequence spans 248 residues: DNA repair protein RecO (248 aa).

The protein belongs to the RecO family.

Its function is as follows. Involved in DNA repair and RecF pathway recombination. This is DNA repair protein RecO from Bartonella tribocorum (strain CIP 105476 / IBS 506).